The sequence spans 1231 residues: Protein FAM193A (1231 aa).

Positions Cys-106 to Tyr-142 form a coiled coil. Residues Asp-249–Ile-272 are disordered. Over residues Ser-258–Ser-270 the composition is skewed to low complexity. Phosphoserine is present on Ser-293. 5 disordered regions span residues Asn-331–Gln-405, Gln-633–Phe-703, Ser-719–Glu-789, Leu-826–Gly-845, and Asn-860–Asp-1174. The span at Glu-355–Ser-365 shows a compositional bias: acidic residues. Position 648 is a phosphoserine (Ser-648). Residues Leu-676 to Ser-691 show a composition bias toward low complexity. Residues Gln-761–Ser-773 are compositionally biased toward acidic residues. A compositionally biased stretch (low complexity) spans Glu-776–Thr-785. A compositionally biased stretch (basic residues) spans Ala-872–Arg-881. Residues Arg-877 to Asn-973 are a coiled coil. Positions Lys-882–Glu-909 are enriched in basic and acidic residues. The segment covering Glu-910–Glu-920 has biased composition (acidic residues). The span at Gln-921–Lys-935 shows a compositional bias: basic and acidic residues. Positions Arg-937 to Arg-946 are enriched in basic residues. Residues Gln-962 to Leu-979 are compositionally biased toward polar residues. Phosphoserine occurs at positions 1136 and 1151. Residues Gly-1156–Gly-1166 are compositionally biased toward basic residues.

The protein belongs to the FAM193 family.

The chain is Protein FAM193A (Fam193a) from Mus musculus (Mouse).